Here is a 993-residue protein sequence, read N- to C-terminus: Replication protein 1a (993 aa).

The tract at residues 50–409 (RNVLSVKDSE…TIVINGMSMQ (360 aa)) is methyltransferase. An Alphavirus-like MT domain is found at 72 to 290 (HLTQQEFAPH…HDWENIKSFL (219 aa)). Positions 537–565 (LAQPVDEVSDSPEVPSSTPDDTADVCGKE) are disordered. The (+)RNA virus helicase ATP-binding domain maps to 687-838 (CVICNSESLS…KIIPDETSDA (152 aa)). Residues 712-975 (VDGVAGCGKT…LTRHKVTFRY (264 aa)) are ATP-dependent helicase. Residue 714–721 (GVAGCGKT) participates in ATP binding. Residues 839–993 (DTTFRSPQDV…DLIAECIARA (155 aa)) enclose the (+)RNA virus helicase C-terminal domain.

It belongs to the bromoviridae replication protein 1a family. As to quaternary structure, interacts with RNA-directed RNA polymerase 2a.

It localises to the host endoplasmic reticulum membrane. Functionally, involved in the virus replication. Contains a helicase domain and a methyltransferase domain. The methyltransferase domain is probably involved in viral RNA capping. Involved in the formation of ER membrane spherular invaginations in which RNA replication complexes form. The protein is Replication protein 1a of Cucumber mosaic virus (strain O) (CMV).